The following is a 257-amino-acid chain: Adenylate kinase (257 aa).

52 to 57 (GAGKGT) contributes to the ATP binding site. The tract at residues 72–101 (ATGDMLRSQVAKKTELGKEAKKIMDQGGLV) is NMP. Residues T73, R78, 99 to 101 (GLV), 128 to 131 (GFPR), and Q135 each bind AMP. Residues 169-206 (GRLVHPASGRSYHKIFNPPKNEMLDDITGEPLIQRSDD) form an LID region. ATP contacts are provided by residues R170 and 179–180 (SY). 2 residues coordinate AMP: R203 and R214. Q242 contributes to the ATP binding site.

Belongs to the adenylate kinase family. AK2 subfamily. As to quaternary structure, monomer.

The protein localises to the cytoplasm. It localises to the cytosol. It is found in the mitochondrion intermembrane space. The enzyme catalyses AMP + ATP = 2 ADP. Catalyzes the reversible transfer of the terminal phosphate group between ATP and AMP. Plays an important role in cellular energy homeostasis and in adenine nucleotide metabolism. Adenylate kinase activity is critical for regulation of the phosphate utilization and the AMP de novo biosynthesis pathways. The chain is Adenylate kinase (adk1) from Aspergillus clavatus (strain ATCC 1007 / CBS 513.65 / DSM 816 / NCTC 3887 / NRRL 1 / QM 1276 / 107).